The sequence spans 311 residues: Probable deoxyhypusine synthase (311 aa).

Catalysis depends on Lys284, which acts as the Nucleophile.

The protein belongs to the deoxyhypusine synthase family. It depends on NAD(+) as a cofactor.

It carries out the reaction [eIF5A protein]-L-lysine + spermidine = [eIF5A protein]-deoxyhypusine + propane-1,3-diamine. Its pathway is protein modification; eIF5A hypusination. Its function is as follows. Catalyzes the NAD-dependent oxidative cleavage of spermidine and the subsequent transfer of the butylamine moiety of spermidine to the epsilon-amino group of a specific lysine residue of the eIF-5A precursor protein to form the intermediate deoxyhypusine residue. The sequence is that of Probable deoxyhypusine synthase (dys) from Sulfurisphaera tokodaii (strain DSM 16993 / JCM 10545 / NBRC 100140 / 7) (Sulfolobus tokodaii).